The following is a 445-amino-acid chain: E3 ubiquitin-protein ligase MYLIP (445 aa).

One can recognise an FERM domain in the interval 1–279 (MLCYVTRPDA…ETHAFYRCDT (279 aa)). Residues 341–363 (RNDQSPPSSPLKSSDSSMSCSSC) are disordered. Residues 350–363 (PLKSSDSSMSCSSC) are compositionally biased toward low complexity. C360, C363, and C368 together coordinate Fe cation. An RING-type zinc finger spans residues 387–422 (CMVCCEEEINSTFCPCGHTVCCESCAAQLQSCPVCR). Residues 431 to 433 (VYL) form a critical for homodimerization region.

Homodimer. Interacts with the E2 ubiquitin-conjugating enzyme, UBE2D1 (via RING-type zinc finger). Interacts with myosin regulatory light chain (MRLC) and TMEM4. Post-translationally, autoubiquitinated. In terms of tissue distribution, expressed in developing and adult brain, hippocampus, cerebellum, cerebral cortex, thalamus and substantia nigra. Predominantly found in neurons.

It is found in the cytoplasm. Its subcellular location is the cell membrane. It catalyses the reaction S-ubiquitinyl-[E2 ubiquitin-conjugating enzyme]-L-cysteine + [acceptor protein]-L-lysine = [E2 ubiquitin-conjugating enzyme]-L-cysteine + N(6)-ubiquitinyl-[acceptor protein]-L-lysine.. The protein operates within protein modification; protein ubiquitination. With respect to regulation, can bind 1 iron ion per dimer. Iron binding seems to decrease LDLR degradation activity. In terms of biological role, E3 ubiquitin-protein ligase that mediates ubiquitination and subsequent proteasomal degradation of myosin regulatory light chain (MRLC), LDLR, VLDLR and LRP8. Activity depends on E2 enzymes of the UBE2D family. Proteasomal degradation of MRLC leads to inhibit neurite outgrowth in presence of NGF by counteracting the stabilization of MRLC by saposin-like protein (CNPY2/MSAP) and reducing CNPY2-stimulated neurite outgrowth. Acts as a sterol-dependent inhibitor of cellular cholesterol uptake by mediating ubiquitination and subsequent degradation of LDLR. This is E3 ubiquitin-protein ligase MYLIP (Mylip) from Rattus norvegicus (Rat).